Consider the following 286-residue polypeptide: ATP synthase gamma chain (286 aa).

This sequence belongs to the ATPase gamma chain family. In terms of assembly, F-type ATPases have 2 components, CF(1) - the catalytic core - and CF(0) - the membrane proton channel. CF(1) has five subunits: alpha(3), beta(3), gamma(1), delta(1), epsilon(1). CF(0) has three main subunits: a, b and c.

It localises to the cell inner membrane. Its function is as follows. Produces ATP from ADP in the presence of a proton gradient across the membrane. The gamma chain is believed to be important in regulating ATPase activity and the flow of protons through the CF(0) complex. The protein is ATP synthase gamma chain of Shewanella pealeana (strain ATCC 700345 / ANG-SQ1).